The following is a 259-amino-acid chain: Large ribosomal subunit protein uL4 (259 aa).

Residues 47-67 are disordered; the sequence is WGTDPMAGKRTTAESFGSGRG.

Belongs to the universal ribosomal protein uL4 family. In terms of assembly, part of the 50S ribosomal subunit.

One of the primary rRNA binding proteins, this protein initially binds near the 5'-end of the 23S rRNA. It is important during the early stages of 50S assembly. It makes multiple contacts with different domains of the 23S rRNA in the assembled 50S subunit and ribosome. Functionally, forms part of the polypeptide exit tunnel. This is Large ribosomal subunit protein uL4 from Methanosphaera stadtmanae (strain ATCC 43021 / DSM 3091 / JCM 11832 / MCB-3).